The following is a 242-amino-acid chain: 1-(5-phosphoribosyl)-5-[(5-phosphoribosylamino)methylideneamino] imidazole-4-carboxamide isomerase (242 aa).

The active-site Proton acceptor is the Asp-10. Asp-132 functions as the Proton donor in the catalytic mechanism.

It belongs to the HisA/HisF family.

Its subcellular location is the cytoplasm. It catalyses the reaction 1-(5-phospho-beta-D-ribosyl)-5-[(5-phospho-beta-D-ribosylamino)methylideneamino]imidazole-4-carboxamide = 5-[(5-phospho-1-deoxy-D-ribulos-1-ylimino)methylamino]-1-(5-phospho-beta-D-ribosyl)imidazole-4-carboxamide. It participates in amino-acid biosynthesis; L-histidine biosynthesis; L-histidine from 5-phospho-alpha-D-ribose 1-diphosphate: step 4/9. The polypeptide is 1-(5-phosphoribosyl)-5-[(5-phosphoribosylamino)methylideneamino] imidazole-4-carboxamide isomerase (Streptococcus sanguinis (strain SK36)).